The chain runs to 77 residues: Acyl carrier protein (77 aa).

A Carrier domain is found at 2–77 (SSIEERVNKI…SAVDYIKAHS (76 aa)). S37 is modified (O-(pantetheine 4'-phosphoryl)serine).

The protein belongs to the acyl carrier protein (ACP) family. 4'-phosphopantetheine is transferred from CoA to a specific serine of apo-ACP by AcpS. This modification is essential for activity because fatty acids are bound in thioester linkage to the sulfhydryl of the prosthetic group.

It is found in the cytoplasm. The protein operates within lipid metabolism; fatty acid biosynthesis. Functionally, carrier of the growing fatty acid chain in fatty acid biosynthesis. This chain is Acyl carrier protein, found in Alcanivorax borkumensis (strain ATCC 700651 / DSM 11573 / NCIMB 13689 / SK2).